The sequence spans 296 residues: Lipoyl synthase (296 aa).

Positions 37, 42, 48, 63, 67, 70, and 276 each coordinate [4Fe-4S] cluster. The Radical SAM core domain occupies 49–265; that stretch reads WSKKHTTVMI…ERLAKTKGFL (217 aa).

The protein belongs to the radical SAM superfamily. Lipoyl synthase family. It depends on [4Fe-4S] cluster as a cofactor.

It localises to the cytoplasm. The catalysed reaction is [[Fe-S] cluster scaffold protein carrying a second [4Fe-4S](2+) cluster] + N(6)-octanoyl-L-lysyl-[protein] + 2 oxidized [2Fe-2S]-[ferredoxin] + 2 S-adenosyl-L-methionine + 4 H(+) = [[Fe-S] cluster scaffold protein] + N(6)-[(R)-dihydrolipoyl]-L-lysyl-[protein] + 4 Fe(3+) + 2 hydrogen sulfide + 2 5'-deoxyadenosine + 2 L-methionine + 2 reduced [2Fe-2S]-[ferredoxin]. It functions in the pathway protein modification; protein lipoylation via endogenous pathway; protein N(6)-(lipoyl)lysine from octanoyl-[acyl-carrier-protein]: step 2/2. Catalyzes the radical-mediated insertion of two sulfur atoms into the C-6 and C-8 positions of the octanoyl moiety bound to the lipoyl domains of lipoate-dependent enzymes, thereby converting the octanoylated domains into lipoylated derivatives. The polypeptide is Lipoyl synthase (Rickettsia rickettsii (strain Iowa)).